Consider the following 896-residue polypeptide: Protein translocase subunit SecA (896 aa).

ATP is bound by residues glutamine 87, 105 to 109, and aspartate 507; that span reads GEGKT. The disordered stretch occupies residues 853–879; it reads ESLSENDEASETQTFRRQEKKIGRNDP. Residues 866–876 show a composition bias toward basic and acidic residues; it reads TFRRQEKKIGR. 4 residues coordinate Zn(2+): cysteine 880, cysteine 882, cysteine 891, and histidine 892.

This sequence belongs to the SecA family. As to quaternary structure, monomer and homodimer. Part of the essential Sec protein translocation apparatus which comprises SecA, SecYEG and auxiliary proteins SecDF-YajC and YidC. Zn(2+) is required as a cofactor.

It is found in the cell inner membrane. It localises to the cytoplasm. It carries out the reaction ATP + H2O + cellular proteinSide 1 = ADP + phosphate + cellular proteinSide 2.. Part of the Sec protein translocase complex. Interacts with the SecYEG preprotein conducting channel. Has a central role in coupling the hydrolysis of ATP to the transfer of proteins into and across the cell membrane, serving both as a receptor for the preprotein-SecB complex and as an ATP-driven molecular motor driving the stepwise translocation of polypeptide chains across the membrane. This chain is Protein translocase subunit SecA, found in Legionella pneumophila (strain Corby).